A 102-amino-acid polypeptide reads, in one-letter code: Putative pterin-4-alpha-carbinolamine dehydratase (102 aa).

Belongs to the pterin-4-alpha-carbinolamine dehydratase family.

It catalyses the reaction (4aS,6R)-4a-hydroxy-L-erythro-5,6,7,8-tetrahydrobiopterin = (6R)-L-erythro-6,7-dihydrobiopterin + H2O. The chain is Putative pterin-4-alpha-carbinolamine dehydratase from Burkholderia cenocepacia (strain ATCC BAA-245 / DSM 16553 / LMG 16656 / NCTC 13227 / J2315 / CF5610) (Burkholderia cepacia (strain J2315)).